The chain runs to 778 residues: Probable potassium transporter 13 (778 aa).

Residues 1–28 (MDVEGGGGGGGGAPPRGRNSWGWQKGTL) are Cytoplasmic-facing. Residues 29 to 49 (LLAYQSFGVVYGDLCISPVYV) traverse the membrane as a helical segment. At 50–72 (YKNTFSGKLRLHEEDEEILGVLS) the chain is on the extracellular side. A helical transmembrane segment spans residues 73–93 (LVFWSLTLIPLLKYIILVLGA). The Cytoplasmic portion of the chain corresponds to 94–156 (DDNGEGGTFA…AFFEKHYSLR (63 aa)). Residues 157-177 (VVLLLFVLMGTSMVIGDGVLT) traverse the membrane as a helical segment. The Extracellular segment spans residues 178–199 (PTMSVLAAVSGLRIKFPELHEN). An N-linked (GlcNAc...) asparagine glycan is attached at asparagine 199. Residues 200–220 (YTVLLACVILIGLFALQHYGT) traverse the membrane as a helical segment. At 221 to 222 (RR) the chain is on the cytoplasmic side. A helical membrane pass occupies residues 223–243 (VGFLFAPILISWLTCIGGIGI). At 244-276 (YNIIKWNPSVIRALSPYYIYNFFRKAGKDGWSS) the chain is on the extracellular side. A helical transmembrane segment spans residues 277–297 (LGGIVLCLTGAEAMFADLGHF). Topologically, residues 298–303 (SKLSLR) are cytoplasmic. A helical transmembrane segment spans residues 304–324 (LGFTIVVYPCLVLAYMGEAAY). The Extracellular segment spans residues 325–343 (LSKHREDLQSSFYKALPDR). Residues 344 to 364 (VFWPVLFIATLATAVGSQAII) form a helical membrane-spanning segment. Residues 365–395 (SATFSIISQCRALGCFPRIKVVHTSSHVHGQ) are Cytoplasmic-facing. The helical transmembrane segment at 396–416 (IYIPEVNWVLMSLCLAVTIGF) threads the bilayer. The Extracellular portion of the chain corresponds to 417-424 (RDTEMIGN). Residues 425-445 (AYGLAVILVMCATTCLMFLVI) form a helical membrane-spanning segment. At 446 to 451 (TTVWNR) the chain is on the cytoplasmic side. The chain crosses the membrane as a helical span at residues 452–472 (WVVWAAAFTVVFGSVELLYLS). The Extracellular segment spans residues 473-477 (ACLAK). Residues 478-498 (VPHGGWLPLLLSLTTLLVMST) form a helical membrane-spanning segment. Over 499–778 (WHYGTAMKQQ…LIEVGMAYRV (280 aa)) the chain is Cytoplasmic. Over residues 655 to 677 (PATSSSGGSNQHAFDAGTTTSSC) the composition is skewed to polar residues. A disordered region spans residues 655–704 (PATSSSGGSNQHAFDAGTTTSSCEIDATAGGGGRRKVRFDNDGGGGGEEE).

It belongs to the HAK/KUP transporter (TC 2.A.72.3) family.

Its subcellular location is the membrane. High-affinity potassium transporter. The chain is Probable potassium transporter 13 (HAK13) from Oryza sativa subsp. japonica (Rice).